We begin with the raw amino-acid sequence, 525 residues long: Cytochrome P450 4V2 (525 aa).

A helical transmembrane segment spans residues 14-34 (LLWGAASAVSLAGATILISIF). Residues Glu329 and Cys467 each contribute to the heme site.

This sequence belongs to the cytochrome P450 family. The cofactor is heme.

It is found in the endoplasmic reticulum membrane. The enzyme catalyses dodecanoate + reduced [NADPH--hemoprotein reductase] + O2 = 12-hydroxydodecanoate + oxidized [NADPH--hemoprotein reductase] + H2O + H(+). The catalysed reaction is tetradecanoate + reduced [NADPH--hemoprotein reductase] + O2 = 14-hydroxytetradecanoate + oxidized [NADPH--hemoprotein reductase] + H2O + H(+). It catalyses the reaction hexadecanoate + reduced [NADPH--hemoprotein reductase] + O2 = 16-hydroxyhexadecanoate + oxidized [NADPH--hemoprotein reductase] + H2O + H(+). It carries out the reaction (5Z,8Z,11Z,14Z,17Z)-eicosapentaenoate + reduced [NADPH--hemoprotein reductase] + O2 = 20-hydroxy-(5Z,8Z,11Z,14Z,17Z)-eicosapentaenoate + oxidized [NADPH--hemoprotein reductase] + H2O + H(+). The enzyme catalyses (4Z,7Z,10Z,13Z,16Z,19Z)-docosahexaenoate + reduced [NADPH--hemoprotein reductase] + O2 = 22-hydroxy-(4Z,7Z,10Z,13Z,16Z,19Z)-docosahexaenoate + oxidized [NADPH--hemoprotein reductase] + H2O + H(+). The protein operates within lipid metabolism; fatty acid metabolism. Its activity is regulated as follows. Inhibited by N-hydroxy-N'-(4-n-butyl-2-methylphenyl formamidine)(HET0016) with an IC(50) of 38 nM. Functionally, a cytochrome P450 monooxygenase involved in fatty acid metabolism in the eye. Catalyzes the omega-hydroxylation of polyunsaturated fatty acids (PUFAs) docosahexaenoate (DHA) and its precursor eicosapentaenoate (EPA), and may contribute to the homeostasis of these retinal PUFAs. Omega hydroxylates saturated fatty acids such as laurate, myristate and palmitate, the catalytic efficiency decreasing in the following order: myristate &gt; laurate &gt; palmitate (C14&gt;C12&gt;C16). Mechanistically, uses molecular oxygen inserting one oxygen atom into a substrate, and reducing the second into a water molecule, with two electrons provided by NADPH via cytochrome P450 reductase (CPR; NADPH-ferrihemoprotein reductase). This Mus musculus (Mouse) protein is Cytochrome P450 4V2 (Cyp4v2).